We begin with the raw amino-acid sequence, 189 residues long: RNA-binding protein (189 aa).

The segment at 55-69 (CICPSSNHLVDDCVC) adopts a C4-type zinc-finger fold. The interval 114–189 (FLTSVNPGES…DANTRKSKRK (76 aa)) is disordered. The span at 158-167 (SSSERKRKEY) shows a compositional bias: basic and acidic residues. Residues 168–180 (SSNSETDLSSDSD) are compositionally biased toward low complexity.

The protein belongs to the phytoreovirus RNA-binding protein family.

The protein localises to the host cytoplasm. Constituent of viral factories. Binds to ssRNA and dsRNA. The polypeptide is RNA-binding protein (Alopecurus aequalis (Barnyard grass)).